The primary structure comprises 577 residues: Thiol:disulfide interchange protein DsbD (577 aa).

A signal peptide spans 1 to 23; the sequence is MAQRIFTLIFLLWTAVGTPQVAA. 2 cysteine pairs are disulfide-bonded: Cys-131–Cys-137 and Cys-194–Cys-316. Transmembrane regions (helical) follow at residues 182–202, 225–245, 255–275, 308–328, 338–358, 369–389, and 396–416; these read ALLIGIGVAFTPCVLPMYPLI, YVQGMALTYTLLGLIVAAAGL, YILIGLSVMFIALALSMFGLY, LAGLICSPCTTAPLSAILLYI, GGTLYLYALGMGLPLILVTLF, WMQYVKEAFGFIILALPVFLL, and AWGIRLWSALGIAFFGWALML. Residues 437-577 form the Thioredoxin domain; that stretch reads VISAKPLQDW…FQAHLQKFSP (141 aa). Cysteines 492 and 495 form a disulfide.

The protein belongs to the thioredoxin family. DsbD subfamily.

It localises to the cell inner membrane. The enzyme catalyses [protein]-dithiol + NAD(+) = [protein]-disulfide + NADH + H(+). The catalysed reaction is [protein]-dithiol + NADP(+) = [protein]-disulfide + NADPH + H(+). Functionally, required to facilitate the formation of correct disulfide bonds in some periplasmic proteins and for the assembly of the periplasmic c-type cytochromes. Acts by transferring electrons from cytoplasmic thioredoxin to the periplasm. This transfer involves a cascade of disulfide bond formation and reduction steps. The chain is Thiol:disulfide interchange protein DsbD from Pectobacterium atrosepticum (strain SCRI 1043 / ATCC BAA-672) (Erwinia carotovora subsp. atroseptica).